The following is a 332-amino-acid chain: 2,3-diketo-L-gulonate reductase (332 aa).

The active-site Proton donor is the His-44. NAD(+) contacts are provided by residues 168-174, 224-225, and 304-306; these read ITMVDMS, WK, and GHE.

Belongs to the LDH2/MDH2 oxidoreductase family. DlgD subfamily. Homodimer.

Its subcellular location is the cytoplasm. It catalyses the reaction 3-dehydro-L-gulonate + NAD(+) = 2,3-dioxo-L-gulonate + NADH + H(+). The catalysed reaction is 3-dehydro-L-gulonate + NADP(+) = 2,3-dioxo-L-gulonate + NADPH + H(+). Functionally, catalyzes the reduction of 2,3-diketo-L-gulonate in the presence of NADH, to form 3-keto-L-gulonate. This Escherichia fergusonii (strain ATCC 35469 / DSM 13698 / CCUG 18766 / IAM 14443 / JCM 21226 / LMG 7866 / NBRC 102419 / NCTC 12128 / CDC 0568-73) protein is 2,3-diketo-L-gulonate reductase.